Reading from the N-terminus, the 415-residue chain is uncharacterized protein (415 aa).

Positions 1 to 55 (MSTGTVTIDRLGAQGDGVARTEAGPVFAPFTLPGETVSLAVNKANGTLISLKEAS) constitute a TRAM domain. Positions 63, 75, 78, and 152 each coordinate [4Fe-4S] cluster. S-adenosyl-L-methionine is bound by residues Gln252, Phe279, Glu299, and Asp347. Cys373 functions as the Nucleophile in the catalytic mechanism.

It belongs to the class I-like SAM-binding methyltransferase superfamily. RNA M5U methyltransferase family.

This is an uncharacterized protein from Rhizobium meliloti (strain 1021) (Ensifer meliloti).